Consider the following 324-residue polypeptide: DNA repair and recombination protein RadA (324 aa).

Position 107 to 114 (107 to 114) interacts with ATP; it reads GEFGSGKS.

The protein belongs to the eukaryotic RecA-like protein family.

Functionally, involved in DNA repair and in homologous recombination. Binds and assemble on single-stranded DNA to form a nucleoprotein filament. Hydrolyzes ATP in a ssDNA-dependent manner and promotes DNA strand exchange between homologous DNA molecules. This chain is DNA repair and recombination protein RadA, found in Methanoculleus marisnigri (strain ATCC 35101 / DSM 1498 / JR1).